The sequence spans 144 residues: Monooxygenase ptaG (144 aa).

It belongs to the avfA family.

It functions in the pathway secondary metabolite biosynthesis. Functionally, monooxygenase; part of the gene cluster that mediates the biosynthesis of pestheic acid, a diphenyl ether which is a biosynthetic precursor of the unique chloropupukeananes. The biosynthesis initiates from condensation of acetate and malonate units catalyzed by the non-reducing PKS ptaA. As the ptaA protein is TE/CLC domain-deficient, hydrolysis and Claisen cyclization of the polyketide could be catalyzed by ptaB containing a beta-lactamase domain. The ptaB protein might hydrolyze the thioester bond between the ACP of ptaA and the intermediate to release atrochrysone carboxylic acid, which is spontaneously dehydrated to form endocrocin anthrone. Endocrocin anthrone is then converted to endocrocin, catalyzed by the anthrone oxygenase ptaC. Spontaneous decarboxylation of endocrocin occurs to generate emodin. An O-methyltransferase (ptaH or ptaI) could methylate emodin to form physcion. PtaJ could then catalyze the oxidative cleavage of physcion, and rotation of the intermediate could then afford desmethylisosulochrin. PtaF, a putative NADH-dependent oxidoreductase, might also participate in the oxidative cleavage step. Desmethylisosulochrin is then transformed by another O-methyltransferase (ptaH or ptaI) to form isosulochrin. Chlorination of isosulochrin by ptaM in the cyclohexadienone B ring then produces chloroisosulochrin. PtaE is responsible for the oxidative coupling reactions of both benzophenones isosulochrin and chloroisosulochrin to RES-1214-1 and pestheic acid respectively, regardless of chlorination. The polypeptide is Monooxygenase ptaG (Pestalotiopsis fici (strain W106-1 / CGMCC3.15140)).